Consider the following 114-residue polypeptide: T cell receptor beta variable 5-4 (114 aa).

The signal sequence occupies residues 1–21 (MGPGLLCWALLCLLGAGSVET). In terms of domain architecture, Ig-like spans 22 to 114 (GVTQSPTHLI…SALYLCASSL (93 aa)). C42 and C110 are oxidised to a cystine. An N-linked (GlcNAc...) asparagine glycan is attached at N90.

As to quaternary structure, alpha-beta TR is a heterodimer composed of an alpha and beta chain; disulfide-linked. The alpha-beta TR is associated with the transmembrane signaling CD3 coreceptor proteins to form the TR-CD3 (TcR or TCR). The assembly of alpha-beta TR heterodimers with CD3 occurs in the endoplasmic reticulum where a single alpha-beta TR heterodimer associates with one CD3D-CD3E heterodimer, one CD3G-CD3E heterodimer and one CD247 homodimer forming a stable octameric structure. CD3D-CD3E and CD3G-CD3E heterodimers preferentially associate with TR alpha and TR beta chains, respectively. The association of the CD247 homodimer is the last step of TcR assembly in the endoplasmic reticulum and is required for transport to the cell surface.

It is found in the cell membrane. V region of the variable domain of T cell receptor (TR) beta chain that participates in the antigen recognition. Alpha-beta T cell receptors are antigen specific receptors which are essential to the immune response and are present on the cell surface of T lymphocytes. Recognize peptide-major histocompatibility (MH) (pMH) complexes that are displayed by antigen presenting cells (APC), a prerequisite for efficient T cell adaptive immunity against pathogens. Binding of alpha-beta TR to pMH complex initiates TR-CD3 clustering on the cell surface and intracellular activation of LCK that phosphorylates the ITAM motifs of CD3G, CD3D, CD3E and CD247 enabling the recruitment of ZAP70. In turn ZAP70 phosphorylates LAT, which recruits numerous signaling molecules to form the LAT signalosome. The LAT signalosome propagates signal branching to three major signaling pathways, the calcium, the mitogen-activated protein kinase (MAPK) kinase and the nuclear factor NF-kappa-B (NF-kB) pathways, leading to the mobilization of transcription factors that are critical for gene expression and essential for T cell growth and differentiation. The T cell repertoire is generated in the thymus, by V-(D)-J rearrangement. This repertoire is then shaped by intrathymic selection events to generate a peripheral T cell pool of self-MH restricted, non-autoaggressive T cells. Post-thymic interaction of alpha-beta TR with the pMH complexes shapes TR structural and functional avidity. The protein is T cell receptor beta variable 5-4 of Homo sapiens (Human).